Reading from the N-terminus, the 407-residue chain is Putative glucose/galactose transporter (407 aa).

12 helical membrane-spanning segments follow: residues 11–31, 47–67, 70–90, 96–116, 139–159, 180–200, 225–245, 263–283, 300–320, 321–341, 349–369, and 378–398; these read GSLT…DILI, LIQF…GNVI, IGYP…CALF, FGSY…IVCL, VQAF…LLIF, VQMP…VMYL, FVFG…IGSF, HYLV…SALM, IILI…ALTF, VGFF…LNLG, GVIS…GVVT, and NLLY…FFAL.

It belongs to the major facilitator superfamily. FHS transporter (TC 2.A.1.7) family.

Its subcellular location is the cell inner membrane. Functionally, intake of glucose and galactose. The polypeptide is Putative glucose/galactose transporter (gluP) (Helicobacter pylori (strain J99 / ATCC 700824) (Campylobacter pylori J99)).